The following is a 530-amino-acid chain: ATP-dependent 6-phosphofructokinase 4, chloroplastic (530 aa).

The N-terminal 54 residues, 1-54 (MEASISFLGSTKPNISLFNPSSNVLPRRDFPLPALKLKKVSVLPRILHQKRLIR), are a transit peptide targeting the chloroplast. Ser-121 carries the phosphoserine modification. ATP-binding positions include Gly-152, 215 to 216 (RG), and 240 to 243 (GGGT). Residues 269 to 271 (TID), 314 to 316 (MGR), Glu-370, and 427 to 430 (YMIR) contribute to the substrate site. The active-site Proton acceptor is Asp-271.

It belongs to the phosphofructokinase type A (PFKA) family. PPi-dependent PFK group II subfamily. Atypical ATP-dependent clade 'X' sub-subfamily. In terms of assembly, homotetramer. It depends on Mg(2+) as a cofactor. Expressed in leaves, stems and flowers.

The protein localises to the plastid. The protein resides in the chloroplast. It catalyses the reaction beta-D-fructose 6-phosphate + ATP = beta-D-fructose 1,6-bisphosphate + ADP + H(+). It functions in the pathway carbohydrate degradation; glycolysis; D-glyceraldehyde 3-phosphate and glycerone phosphate from D-glucose: step 3/4. With respect to regulation, allosterically activated by AMP. Functionally, catalyzes the phosphorylation of D-fructose 6-phosphate to fructose 1,6-bisphosphate by ATP, the first committing step of glycolysis. The chain is ATP-dependent 6-phosphofructokinase 4, chloroplastic from Arabidopsis thaliana (Mouse-ear cress).